The sequence spans 385 residues: Rubredoxin-NAD(+) reductase (385 aa).

Residues 8–11 (AGTA), 32–33 (SR), I79, E156, D275, and I293 contribute to the FAD site.

The protein belongs to the FAD-dependent oxidoreductase family. As to quaternary structure, homodimer. It depends on FAD as a cofactor.

The protein localises to the cytoplasm. It catalyses the reaction 2 reduced [rubredoxin] + NAD(+) + H(+) = 2 oxidized [rubredoxin] + NADH. It functions in the pathway hydrocarbon metabolism; alkane degradation. In terms of biological role, involved in the hydrocarbon hydroxylating system, which transfers electrons from NADH to rubredoxin reductase and then through rubredoxin to alkane 1 monooxygenase. The protein is Rubredoxin-NAD(+) reductase (alkT) of Ectopseudomonas oleovorans (Pseudomonas oleovorans).